We begin with the raw amino-acid sequence, 723 residues long: Polyribonucleotide nucleotidyltransferase (723 aa).

The Mg(2+) site is built by D487 and D493. A KH domain is found at 554-613 (PKILIMHINPDKIREVIGPSGKQINKIIDETGVKIDIEQDGTIFISSVDEAANQKAKQII). An S1 motif domain is found at 623–691 (GQVYLGKVKR…KQGRVNLSRK (69 aa)). The interval 702–723 (GELPRESREKRGRRPERHRMKP) is disordered. The segment covering 711–723 (KRGRRPERHRMKP) has biased composition (basic residues).

The protein belongs to the polyribonucleotide nucleotidyltransferase family. The cofactor is Mg(2+).

The protein localises to the cytoplasm. It carries out the reaction RNA(n+1) + phosphate = RNA(n) + a ribonucleoside 5'-diphosphate. Involved in mRNA degradation. Catalyzes the phosphorolysis of single-stranded polyribonucleotides processively in the 3'- to 5'-direction. The chain is Polyribonucleotide nucleotidyltransferase from Geobacillus kaustophilus (strain HTA426).